Here is a 464-residue protein sequence, read N- to C-terminus: Arginine biosynthesis bifunctional protein ArgJ, chloroplastic (464 aa).

Residues T208, K234, T245, E332, N459, and T464 each contribute to the substrate site. T245 serves as the catalytic Nucleophile.

This sequence belongs to the ArgJ family. In terms of assembly, heterodimer of an alpha and a beta chain.

The protein localises to the plastid. It localises to the chloroplast. It catalyses the reaction N(2)-acetyl-L-ornithine + L-glutamate = N-acetyl-L-glutamate + L-ornithine. It carries out the reaction L-glutamate + acetyl-CoA = N-acetyl-L-glutamate + CoA + H(+). It functions in the pathway amino-acid biosynthesis; L-arginine biosynthesis; L-ornithine and N-acetyl-L-glutamate from L-glutamate and N(2)-acetyl-L-ornithine (cyclic): step 1/1. The protein operates within amino-acid biosynthesis; L-arginine biosynthesis; N(2)-acetyl-L-ornithine from L-glutamate: step 1/4. Functionally, catalyzes two activities which are involved in the cyclic version of arginine biosynthesis: the synthesis of acetylglutamate from glutamate and acetyl-CoA, and of ornithine by transacetylation between acetylornithine and glutamate. In Sorghum bicolor (Sorghum), this protein is Arginine biosynthesis bifunctional protein ArgJ, chloroplastic.